A 367-amino-acid polypeptide reads, in one-letter code: Peptide chain release factor 1 (367 aa).

An N5-methylglutamine modification is found at glutamine 243.

Belongs to the prokaryotic/mitochondrial release factor family. Post-translationally, methylated by PrmC. Methylation increases the termination efficiency of RF1.

It localises to the cytoplasm. Peptide chain release factor 1 directs the termination of translation in response to the peptide chain termination codons UAG and UAA. The protein is Peptide chain release factor 1 of Acidovorax ebreus (strain TPSY) (Diaphorobacter sp. (strain TPSY)).